A 291-amino-acid polypeptide reads, in one-letter code: Short-chain dehydrogenase/reductase GME11359 (291 aa).

NADP(+)-binding residues include L18, D67, N96, Y177, K181, and V209. The Proton acceptor role is filled by Y177. Catalysis depends on K181, which acts as the Lowers pKa of active site Tyr.

Belongs to the short-chain dehydrogenases/reductases (SDR) family.

It participates in secondary metabolite biosynthesis. In terms of biological role, short-chain dehydrogenase/reductase; part of the gene cluster that mediates the biosynthesis of dibenzodioxocinones such as pestalotiollide B, a novel class of inhibitors against cholesterol ester transfer protein (CEPT). The biosynthesis initiates from condensation of acetate and malonate units catalyzed by the non-reducing PKS pks8/GME11356. Pks8/GME11356 lacks a thioesterase (TE) domain, which is important to the cyclizing of the third ring of atrochrysone carboxylic acid, and the esterase GME11355 might play the role of TE and catalyzes the cyclization reaction of the C ring. The lactamase-like protein GME11357 (or other beta-lactamases in Pestalotiopsis microspora) probably hydrolyzes the thioester bond between the ACP of pks8/GME11356 and the intermediate to release atrochrysone carboxylic acid, which is spontaneously dehydrates to form endocrocin anthrone. Endocrocin anthrone is further converted to emodin via the endocrocin intermediate. Emodin is then oxidized by several enzymes such as the Baeyer-Villiger oxidase GME11358, the oxidoreductase GME11367, the short chain dehydrogenase/reductase GME11373, as well as by other oxidoreductases from the cluster, to modify the A and C rings and open the B ring, and finally yield monodictyphenone. The prenyltransferase GME11375 may catalyze the addition reaction between the C5 side chains and the carbon bone of dibenzodioxocinones. The remaining biochemical reactions to the final product dibenzodioxocinones should be methylation catalyzed by methyltransferase GME11366 and reduction and lactonization reaction catalyzed by a series of oxidordeuctases. The protein is Short-chain dehydrogenase/reductase GME11359 of Pestalotiopsis microspora.